We begin with the raw amino-acid sequence, 418 residues long: Probable serine/threonine-protein kinase nek2 (418 aa).

The Protein kinase domain maps to 4–264 (YEILGALGKG…VNELLGYSFI (261 aa)). ATP-binding positions include 10–18 (LGKGSFGVV) and K33. The active-site Proton acceptor is the D135. Positions 278 to 363 (QGLKQMDEDL…SNLSLNCNNS (86 aa)) form a coiled coil.

This sequence belongs to the protein kinase superfamily. NEK Ser/Thr protein kinase family. NIMA subfamily.

The enzyme catalyses L-seryl-[protein] + ATP = O-phospho-L-seryl-[protein] + ADP + H(+). It carries out the reaction L-threonyl-[protein] + ATP = O-phospho-L-threonyl-[protein] + ADP + H(+). Involved in centrosome biogenesis. Seems to be required for recruitment of centrosomal material and might be involved in de novo centrosome formation. The sequence is that of Probable serine/threonine-protein kinase nek2 (nek2) from Dictyostelium discoideum (Social amoeba).